The sequence spans 402 residues: Serine/threonine transporter SstT (402 aa).

The next 9 helical transmembrane spans lie at isoleucine 19–leucine 39, leucine 43–alanine 63, threonine 86–leucine 106, alanine 138–methionine 158, valine 179–isoleucine 199, leucine 212–isoleucine 232, isoleucine 287–leucine 307, valine 327–isoleucine 347, and phenylalanine 354–isoleucine 374.

This sequence belongs to the dicarboxylate/amino acid:cation symporter (DAACS) (TC 2.A.23) family.

It localises to the cell membrane. The enzyme catalyses L-serine(in) + Na(+)(in) = L-serine(out) + Na(+)(out). It carries out the reaction L-threonine(in) + Na(+)(in) = L-threonine(out) + Na(+)(out). In terms of biological role, involved in the import of serine and threonine into the cell, with the concomitant import of sodium (symport system). This chain is Serine/threonine transporter SstT, found in Streptococcus agalactiae serotype III (strain NEM316).